We begin with the raw amino-acid sequence, 149 residues long: Nucleoside diphosphate kinase 1 (149 aa).

Residues Lys-9, Phe-57, Arg-85, Thr-91, Arg-102, and Asn-112 each coordinate ATP. His-115 acts as the Pros-phosphohistidine intermediate in catalysis.

It belongs to the NDK family. Requires Mg(2+) as cofactor. Post-translationally, autophosphorylated.

It carries out the reaction a 2'-deoxyribonucleoside 5'-diphosphate + ATP = a 2'-deoxyribonucleoside 5'-triphosphate + ADP. The enzyme catalyses a ribonucleoside 5'-diphosphate + ATP = a ribonucleoside 5'-triphosphate + ADP. Major role in the synthesis of nucleoside triphosphates other than ATP. The ATP gamma phosphate is transferred to the NDP beta phosphate via a ping-pong mechanism, using a phosphorylated active-site intermediate. Also exhibits a kinase-like activity towards histone H1. The polypeptide is Nucleoside diphosphate kinase 1 (NDPK1) (Saccharum officinarum (Sugarcane)).